Reading from the N-terminus, the 305-residue chain is Oligopeptide transport system permease protein OppC (305 aa).

The next 6 membrane-spanning stretches (helical) occupy residues 43-63 (AMVG…APMF), 105-125 (ISIF…VIWG), 166-185 (LFTI…ARIV), 212-232 (LFKH…TLTV), 236-256 (IFTE…LASW), and 274-294 (LFFP…VGDG). In terms of domain architecture, ABC transmembrane type-1 spans 103-292 (ARISIFIGVA…ITMFGFNVVG (190 aa)).

Belongs to the binding-protein-dependent transport system permease family. OppBC subfamily. As to quaternary structure, the complex is composed of two ATP-binding proteins (OppD and OppF), two transmembrane proteins (OppB and OppC) and a solute-binding protein (OppA).

Its subcellular location is the cell membrane. Part of the ABC transporter complex OppABCDF involved in the uptake of oligopeptides. Probably responsible for the translocation of the substrate across the membrane. Required for sporulation and genetic competence. This chain is Oligopeptide transport system permease protein OppC, found in Bacillus subtilis (strain 168).